The primary structure comprises 316 residues: Phosphatidylinositol mannoside acyltransferase (316 aa).

His137 serves as the catalytic Proton acceptor. Hexadecanoyl-CoA is bound by residues His137 and Arg175. The active site involves Glu211. Glu240 provides a ligand contact to hexadecanoyl-CoA.

The protein belongs to the LpxL/LpxM/LpxP family.

Its subcellular location is the cell inner membrane. The enzyme catalyses a 2,6-O-bis(alpha-D-mannopyranosyl)-1-phosphatidyl-1D-myo-inositol + an acyl-CoA = a 2-O-(alpha-D-mannosyl)-6-O-(6-O-acyl-alpha-D-mannosyl)-1-phosphatidyl-1D-myo-inositol + CoA. The catalysed reaction is a 1,2-diacyl-sn-glycero-3-phospho-[alpha-D-mannopyranosyl-(1&lt;-&gt;6)-D-myo-inositol] + an acyl-CoA = a 1,2-diacyl-sn-glycero-3-phospho-[alpha-D-6-acyl-mannopyranosyl-(1&lt;-&gt;6)-D-myo-inositol] + CoA. The protein operates within phospholipid metabolism; phosphatidylinositol metabolism. Functionally, catalyzes the transfer of a palmitoyl moiety from palmitoyl-CoA to the 6-position of the mannose ring linked to the 2-position of myo-inositol in phosphatidyl-myo-inositol monomannoside (PIM1) or dimannoside (PIM2). The sequence is that of Phosphatidylinositol mannoside acyltransferase from Mycobacterium tuberculosis (strain CDC 1551 / Oshkosh).